Here is a 334-residue protein sequence, read N- to C-terminus: Large ribosomal subunit protein uL3 (334 aa).

Basic residues predominate over residues 1 to 10 (MGMKKNRPRR). Residues 1-21 (MGMKKNRPRRGSLAFSPRKRA) form a disordered region.

Belongs to the universal ribosomal protein uL3 family. As to quaternary structure, part of the 50S ribosomal subunit. Forms a cluster with proteins L14 and L24e.

Functionally, one of the primary rRNA binding proteins, it binds directly near the 3'-end of the 23S rRNA, where it nucleates assembly of the 50S subunit. The chain is Large ribosomal subunit protein uL3 from Methanococcus maripaludis (strain DSM 14266 / JCM 13030 / NBRC 101832 / S2 / LL).